Consider the following 204-residue polypeptide: MSVSMDHRVLALAGVAQALQQVRRIAETGHSEAATVRTAMDSVFRVDAASPEAVYGSAAALAPGLRLLHNYFRNQGQDEVLPRLALAVLQLERRFVRDTSTVATVASGIDAAARQAQQLGDSSHPDVLSSLGGLYAQTISHLRPKVMVQGNPHYLGQAGVVAEIRALLLAAVRSAVLWRQMGGNLWDFLFAKRAMIEAVDRALR.

Belongs to the HflD family.

Its subcellular location is the cytoplasm. It is found in the cell inner membrane. This Xanthomonas euvesicatoria pv. vesicatoria (strain 85-10) (Xanthomonas campestris pv. vesicatoria) protein is High frequency lysogenization protein HflD homolog.